A 115-amino-acid chain; its full sequence is Holo-[acyl-carrier-protein] synthase (115 aa).

Mg(2+) is bound by residues D8 and E50.

It belongs to the P-Pant transferase superfamily. AcpS family. It depends on Mg(2+) as a cofactor.

The protein localises to the cytoplasm. The catalysed reaction is apo-[ACP] + CoA = holo-[ACP] + adenosine 3',5'-bisphosphate + H(+). Functionally, transfers the 4'-phosphopantetheine moiety from coenzyme A to a Ser of acyl-carrier-protein. This is Holo-[acyl-carrier-protein] synthase from Pseudarthrobacter chlorophenolicus (strain ATCC 700700 / DSM 12829 / CIP 107037 / JCM 12360 / KCTC 9906 / NCIMB 13794 / A6) (Arthrobacter chlorophenolicus).